We begin with the raw amino-acid sequence, 191 residues long: Peptidyl-tRNA hydrolase (191 aa).

Y14 serves as a coordination point for tRNA. H19 functions as the Proton acceptor in the catalytic mechanism. TRNA is bound by residues F64, N66, and N113.

It belongs to the PTH family. As to quaternary structure, monomer.

Its subcellular location is the cytoplasm. The catalysed reaction is an N-acyl-L-alpha-aminoacyl-tRNA + H2O = an N-acyl-L-amino acid + a tRNA + H(+). In terms of biological role, hydrolyzes ribosome-free peptidyl-tRNAs (with 1 or more amino acids incorporated), which drop off the ribosome during protein synthesis, or as a result of ribosome stalling. Catalyzes the release of premature peptidyl moieties from peptidyl-tRNA molecules trapped in stalled 50S ribosomal subunits, and thus maintains levels of free tRNAs and 50S ribosomes. In Fusobacterium nucleatum subsp. nucleatum (strain ATCC 25586 / DSM 15643 / BCRC 10681 / CIP 101130 / JCM 8532 / KCTC 2640 / LMG 13131 / VPI 4355), this protein is Peptidyl-tRNA hydrolase.